The following is a 284-amino-acid chain: Parvulin-like PPIase (284 aa).

Residues M1–A20 form the signal peptide. The PpiC domain maps to K139–E232.

Belongs to the PpiC/parvulin rotamase family.

Its subcellular location is the cell outer membrane. The enzyme catalyses [protein]-peptidylproline (omega=180) = [protein]-peptidylproline (omega=0). This Rickettsia bellii (strain RML369-C) protein is Parvulin-like PPIase (plp).